Here is an 86-residue protein sequence, read N- to C-terminus: Small ribosomal subunit protein bS20 (86 aa).

Residues 1-25 are disordered; it reads MANIKSAIKRAKTSEKRRVANSQEK.

Belongs to the bacterial ribosomal protein bS20 family.

Its function is as follows. Binds directly to 16S ribosomal RNA. In Exiguobacterium sp. (strain ATCC BAA-1283 / AT1b), this protein is Small ribosomal subunit protein bS20.